We begin with the raw amino-acid sequence, 87 residues long: Large ribosomal subunit protein bL31B (87 aa).

The protein belongs to the bacterial ribosomal protein bL31 family. Type B subfamily. In terms of assembly, part of the 50S ribosomal subunit.

The protein is Large ribosomal subunit protein bL31B of Paraburkholderia phymatum (strain DSM 17167 / CIP 108236 / LMG 21445 / STM815) (Burkholderia phymatum).